The following is an 804-amino-acid chain: Cyclic di-GMP-binding protein (804 aa).

The first 18 residues, 1–18 (MKMVSLIALLVFATGAQA), serve as a signal peptide directing secretion. Topologically, residues 19-766 (APIASKAPAH…DWYMHNHPFR (748 aa)) are periplasmic. Positions 24–69 (KAPAHQPTGSDLPPLPAAAPVAPAAQPSAQAVDPASAAPASDAGSA) are disordered. A helical transmembrane segment spans residues 767–787 (VIVVGLVGCLLVVAVLVRALF). Residues 788-804 (RHAMFRRRQLQEERQKS) lie on the Cytoplasmic side of the membrane.

It belongs to the AcsB/BcsB family. In terms of assembly, tightly associated with the cellulose synthase catalytic subunit.

The protein resides in the cell inner membrane. Its pathway is glycan metabolism; bacterial cellulose biosynthesis. Functionally, binds the cellulose synthase activator, bis-(3'-5') cyclic diguanylic acid (c-di-GMP). This chain is Cyclic di-GMP-binding protein (bcsBI), found in Komagataeibacter xylinus (Gluconacetobacter xylinus).